Reading from the N-terminus, the 1305-residue chain is RNA-directed RNA polymerase (1305 aa).

Residues 563-814 form the RdRp catalytic domain; it reads IIVGDLEATG…KTLIAPFSVE (252 aa).

Belongs to the reoviridae RNA-directed RNA polymerase family.

It carries out the reaction RNA(n) + a ribonucleoside 5'-triphosphate = RNA(n+1) + diphosphate. This chain is RNA-directed RNA polymerase (Segment-1), found in African horse sickness virus (AHSV).